A 417-amino-acid polypeptide reads, in one-letter code: CinA-like protein (417 aa).

This sequence belongs to the CinA family.

This Gloeothece citriformis (strain PCC 7424) (Cyanothece sp. (strain PCC 7424)) protein is CinA-like protein.